Here is a 273-residue protein sequence, read N- to C-terminus: 1,4-dihydroxy-2-naphthoyl-CoA synthase (273 aa).

Substrate is bound by residues Arg-34, 73–77 (SGGDQ), Tyr-85, 117–121 (YAVGG), Thr-143, Ser-149, Tyr-246, and Lys-261. 142–144 (QTG) serves as a coordination point for hydrogencarbonate. Positions 254 to 265 (GRDAFKEKRDPD) are enriched in basic and acidic residues. The interval 254 to 273 (GRDAFKEKRDPDFDQFPKFP) is disordered.

It belongs to the enoyl-CoA hydratase/isomerase family. MenB subfamily. The cofactor is hydrogencarbonate.

The enzyme catalyses 2-succinylbenzoyl-CoA + H(+) = 1,4-dihydroxy-2-naphthoyl-CoA + H2O. Its pathway is quinol/quinone metabolism; 1,4-dihydroxy-2-naphthoate biosynthesis; 1,4-dihydroxy-2-naphthoate from chorismate: step 6/7. It functions in the pathway quinol/quinone metabolism; menaquinone biosynthesis. Converts o-succinylbenzoyl-CoA (OSB-CoA) to 1,4-dihydroxy-2-naphthoyl-CoA (DHNA-CoA). The polypeptide is 1,4-dihydroxy-2-naphthoyl-CoA synthase (Staphylococcus aureus (strain Mu50 / ATCC 700699)).